A 144-amino-acid chain; its full sequence is AP-4 complex subunit sigma-1 (144 aa).

This sequence belongs to the adaptor complexes small subunit family. As to quaternary structure, adaptor protein complex 4 (AP-4) is a heterotetramer composed of two large adaptins (epsilon-type subunit AP4E1 and beta-type subunit AP4B1), a medium adaptin (mu-type subunit AP4M1) and a small adaptin (sigma-type AP4S1). As to expression, widely expressed.

Its subcellular location is the golgi apparatus. It is found in the trans-Golgi network membrane. Functionally, component of the adaptor protein complex 4 (AP-4). Adaptor protein complexes are vesicle coat components involved both in vesicle formation and cargo selection. They control the vesicular transport of proteins in different trafficking pathways. AP-4 forms a non clathrin-associated coat on vesicles departing the trans-Golgi network (TGN) and may be involved in the targeting of proteins from the trans-Golgi network (TGN) to the endosomal-lysosomal system. It is also involved in protein sorting to the basolateral membrane in epithelial cells and the proper asymmetric localization of somatodendritic proteins in neurons. AP-4 is involved in the recognition and binding of tyrosine-based sorting signals found in the cytoplasmic part of cargos, but may also recognize other types of sorting signal. The sequence is that of AP-4 complex subunit sigma-1 from Homo sapiens (Human).